An 84-amino-acid polypeptide reads, in one-letter code: Alpha-mammal toxin Ts2 (84 aa).

The N-terminal stretch at 1 to 20 is a signal peptide; the sequence is MKGFLLFISILMMIGTIVVG. The region spanning 21 to 83 is the LCN-type CS-alpha/beta domain; sequence KEGYAMDHEG…VWDYATNKCG (63 aa). Disulfide bonds link cysteine 31/cysteine 82, cysteine 35/cysteine 58, cysteine 43/cysteine 63, and cysteine 47/cysteine 65. A Cysteine amide modification is found at cysteine 82.

It belongs to the long (4 C-C) scorpion toxin superfamily. Sodium channel inhibitor family. Beta subfamily. In terms of tissue distribution, expressed by the venom gland.

Its subcellular location is the secreted. Alpha toxins bind voltage-independently at site-3 of sodium channels (Nav) and inhibit the inactivation of the activated channels, thereby blocking neuronal transmission. This toxin acts on Nav1.2/SCN2A, Nav1.3/SCN3A, Nav1.5/SCN5A, Nav1.6/SCN8A and Nav1.7/SCN9A voltage-gated sodium channels, with the highest affinity for Nav1.3/SCN3A, followed by Nav1.6/SCN8A and Nav1.7/SCN9A which are affected almost equally. Interestingly, shows a significant shift of the voltage dependence of activation for Nav1.3/SCN3A that is characteristic of beta-toxins. In addition, in presence of LPS, this toxin inhibits the release of NO, IL-6 and TNF-alpha in J774.1 cells. Further, in the absence of LPS, it stimulates the production of the anti-inflammatory cytokine IL-10. This toxin is active on mammals. The polypeptide is Alpha-mammal toxin Ts2 (Tityus serrulatus (Brazilian scorpion)).